A 729-amino-acid polypeptide reads, in one-letter code: Fatty acid oxidation complex subunit alpha (729 aa).

The tract at residues 1 to 189 (MLYKGDTLYL…KIGLVDGVVK (189 aa)) is enoyl-CoA hydratase/isomerase. Asp296 contributes to the substrate binding site. The segment at 311–729 (ETPKQAAVLG…ARPVGDLKTA (419 aa)) is 3-hydroxyacyl-CoA dehydrogenase. Residues Met324, Asp343, 400-402 (VVE), Lys407, and Ser429 each bind NAD(+). The For 3-hydroxyacyl-CoA dehydrogenase activity role is filled by His450. Asn453 is a binding site for NAD(+). Asn500 and Tyr660 together coordinate substrate. Residues 708-729 (RHNEPYYPPVEPARPVGDLKTA) form a disordered region.

In the N-terminal section; belongs to the enoyl-CoA hydratase/isomerase family. This sequence in the C-terminal section; belongs to the 3-hydroxyacyl-CoA dehydrogenase family. Heterotetramer of two alpha chains (FadB) and two beta chains (FadA).

The enzyme catalyses a (3S)-3-hydroxyacyl-CoA + NAD(+) = a 3-oxoacyl-CoA + NADH + H(+). The catalysed reaction is a (3S)-3-hydroxyacyl-CoA = a (2E)-enoyl-CoA + H2O. It carries out the reaction a 4-saturated-(3S)-3-hydroxyacyl-CoA = a (3E)-enoyl-CoA + H2O. It catalyses the reaction (3S)-3-hydroxybutanoyl-CoA = (3R)-3-hydroxybutanoyl-CoA. The enzyme catalyses a (3Z)-enoyl-CoA = a 4-saturated (2E)-enoyl-CoA. The catalysed reaction is a (3E)-enoyl-CoA = a 4-saturated (2E)-enoyl-CoA. Its pathway is lipid metabolism; fatty acid beta-oxidation. Functionally, involved in the aerobic and anaerobic degradation of long-chain fatty acids via beta-oxidation cycle. Catalyzes the formation of 3-oxoacyl-CoA from enoyl-CoA via L-3-hydroxyacyl-CoA. It can also use D-3-hydroxyacyl-CoA and cis-3-enoyl-CoA as substrate. The protein is Fatty acid oxidation complex subunit alpha of Escherichia coli O8 (strain IAI1).